A 233-amino-acid polypeptide reads, in one-letter code: tRNA (guanine-N(7)-)-methyltransferase (233 aa).

Residues Glu-65, Glu-90, Asp-117, and Asp-139 each contribute to the S-adenosyl-L-methionine site. The active site involves Asp-139. Substrate-binding positions include Lys-143, Asp-175, and 212 to 215; that span reads TRYE.

This sequence belongs to the class I-like SAM-binding methyltransferase superfamily. TrmB family.

It carries out the reaction guanosine(46) in tRNA + S-adenosyl-L-methionine = N(7)-methylguanosine(46) in tRNA + S-adenosyl-L-homocysteine. Its pathway is tRNA modification; N(7)-methylguanine-tRNA biosynthesis. Functionally, catalyzes the formation of N(7)-methylguanine at position 46 (m7G46) in tRNA. The chain is tRNA (guanine-N(7)-)-methyltransferase from Roseobacter denitrificans (strain ATCC 33942 / OCh 114) (Erythrobacter sp. (strain OCh 114)).